We begin with the raw amino-acid sequence, 193 residues long: uncharacterized protein (193 aa).

Residues 1-144 (MEKKRTLSVN…NNNNNNEGTI (144 aa)) form a disordered region. Residues 29–86 (NSLNNIENNECNNNNNNNNNNNNNNSNSNNLNNSNNNNINTSSNSINSSNSINNSIDN) show a composition bias toward low complexity. The span at 103 to 118 (KMNSSQEFQSYLTPNK) shows a compositional bias: polar residues. A compositionally biased stretch (low complexity) spans 119 to 140 (NNNNRNNNNRNNNNNNNNNNNN). Residues 158–180 (YMIRPFLVGASASFGISIGMFYF) form a helical membrane-spanning segment.

The protein localises to the membrane. This is an uncharacterized protein from Dictyostelium discoideum (Social amoeba).